A 467-amino-acid polypeptide reads, in one-letter code: Thiohydroximate-O-sulfate sulfur/sulfate-lyase (nitrile-forming) NSP3 (467 aa).

A Jacalin-type lectin domain is found at 2-143 (AQKLVAQGGE…LHSLGAYVSL (142 aa)). Kelch repeat units follow at residues 177 to 225 (KIYS…VRMV), 230 to 276 (TLYT…SMAA), 280 to 329 (NVYV…VVQG), 331 to 375 (VWIV…ASAA), and 379 to 434 (HIVI…ASTT). The Proton donor role is filled by R237. A (Z)-N-(sulfonatooxy)alkanimidothioate contacts are provided by R237, S270, R292, G321, and V370. The active-site Proton donor is the R292. The Fe(2+) site is built by E386, D390, and H394. W429 lines the a (Z)-N-(sulfonatooxy)alkanimidothioate pocket.

Belongs to the jacalin lectin family. It depends on Fe(2+) as a cofactor. In terms of tissue distribution, mainly expressed in roots, and, at low levels, in seedlings and leaves. Observed in seeds.

It carries out the reaction a (Z)-N-(sulfonatooxy)alkanimidothioate = a nitrile + sulfur + sulfate. The catalysed reaction is (Z)-phenyl-N-(sulfonatooxy)methanimidothioate = phenylacetonitrile + sulfur + sulfate. The enzyme catalyses (Z)-N-(sulfonatooxy)prop-2-enimidothioate = but-3-enenitrile + sulfur + sulfate. Its function is as follows. Specifier protein responsible for constitutive and herbivore-induced simple nitrile formation, especially in roots. Promotes simple nitriles, but not epithionitrile or thiocyanate formation. Converts allylglucosinolate and benzylglucosinolate (glucotropaeolin) to their corresponding simple nitriles in the presence of myrosinase. In Arabidopsis thaliana (Mouse-ear cress), this protein is Thiohydroximate-O-sulfate sulfur/sulfate-lyase (nitrile-forming) NSP3.